We begin with the raw amino-acid sequence, 386 residues long: S-adenosylmethionine:tRNA ribosyltransferase-isomerase (386 aa).

This sequence belongs to the QueA family. In terms of assembly, monomer.

The protein resides in the cytoplasm. The catalysed reaction is 7-aminomethyl-7-carbaguanosine(34) in tRNA + S-adenosyl-L-methionine = epoxyqueuosine(34) in tRNA + adenine + L-methionine + 2 H(+). It functions in the pathway tRNA modification; tRNA-queuosine biosynthesis. In terms of biological role, transfers and isomerizes the ribose moiety from AdoMet to the 7-aminomethyl group of 7-deazaguanine (preQ1-tRNA) to give epoxyqueuosine (oQ-tRNA). In Rickettsia canadensis (strain McKiel), this protein is S-adenosylmethionine:tRNA ribosyltransferase-isomerase.